The following is a 248-amino-acid chain: uncharacterized protein (248 aa).

6 helical membrane passes run 65-85, 105-125, 126-146, 156-176, 188-208, and 222-242; these read IIIY…QFLT, SITS…ILWY, ISWT…LGFI, LCCF…TLLI, LILN…SDYS, and VIYI…YKYT.

The protein resides in the cell membrane. This is an uncharacterized protein from Rickettsia prowazekii (strain Madrid E).